The following is a 432-amino-acid chain: Probable rhamnogalacturonase E (432 aa).

A signal peptide spans 1–21 (MQSKTFSVLSSCLLLIATVQG). A disulfide bond links Cys42 and Cys68. Residues Asn53, Asn91, and Asn106 are each glycosylated (N-linked (GlcNAc...) asparagine). Asp221 serves as the catalytic Proton donor. A disulfide bridge links Cys223 with Cys240. Residues Asn241 and Asn256 are each glycosylated (N-linked (GlcNAc...) asparagine). His296 is an active-site residue. 2 disulfide bridges follow: Cys329-Cys335 and Cys357-Cys366.

This sequence belongs to the glycosyl hydrolase 28 family.

Its subcellular location is the secreted. Pectinolytic enzymes consist of four classes of enzymes: pectine lyase, polygalacturonase, pectin methylesterase and rhamnogalacturonase. Hydrolyzes alpha-D-galacturonopyranosyl-(1,2)-alpha-L-rhamnopyranosyl linkages in the backbone of the hairy regions of pectins. The chain is Probable rhamnogalacturonase E (rhgE) from Aspergillus oryzae (strain ATCC 42149 / RIB 40) (Yellow koji mold).